The primary structure comprises 21 residues: Peptidyl-prolyl cis-trans isomerase (21 aa).

Residues E1 to N21 form a disordered region.

Belongs to the cyclophilin-type PPIase family. PPIase A subfamily.

It carries out the reaction [protein]-peptidylproline (omega=180) = [protein]-peptidylproline (omega=0). Its function is as follows. PPIases accelerate the folding of proteins. It catalyzes the cis-trans isomerization of proline imidic peptide bonds in oligopeptides. The protein is Peptidyl-prolyl cis-trans isomerase of Naegleria fowleri (Brain eating amoeba).